The sequence spans 813 residues: MRRALRLLPLPLSIAICLPAMAADKPFNWGLCPTVDPLPGFDGAPAADPKAAEMRQQLPTDIEGDQLSGTSTTPQYQGNVALKRGDQFLGADNLRMDTETGNYIAEGNVRYQDTSFRMVADRAEGNQDTDTHKVTNIRYQLVERRGNGDAESVDLQGQVGQMHRSTYTTCDPSQPIWRVRAPEIDVDNGEGFGTARNAVLQIGNVPVLYFPWFKFPIDDRRQTGLLFPQFGLSRRNGFDYLQPIYLNLAPNYDATLLPRYMSKRGFMFGTEFRYLYEGGRGEVTGNYLPNDKLRDKDRGSVFYSGYHNVNSNWQARSSISWVSDTRYVEDFTSRLNGMGSASSLQSTVGIYGTGETWTAGLMAERWQLTDYTLDERSLPYNRQPRAYFNWEKPFGIFEAGVYAEAVRFTHDDSYFVQPPSPSVPGEANNRDNNDKYVRTNIRNQEYGSGSRLDLKPYVSMPLSGAAWFFTPTLAWRYTAYQLDSTLAKTGPLTGDRSPSRSLPIASVDAGLYFDRETSLLGTNYLNTLEPRMYYLYVPYRDQDDLPVFDTRPFTFSYGQLFRDTRYTGADRQNDANQLTLAVTSRWLRQDDGREKLSLSAGQILYFSDSRVTINNSTNAVAGSEQTIDQGKSAWVVDANYMINDRWSMGATYQWNPNSRKEDLASLRTRYLLDNDGIINLAYRYRRNLIDNSDQLKQADFSFLYPINPSWSAVGRYYYSLQDRKPLEIIGGVQWDSCCLAVRGLVRRFVRNRDGQMDNSIQIEFVLKGLSSFGQNTDRTLRRAILGYYRDDLYLVPPSNTTTNPDDYDPNLIP.

The first 22 residues, 1 to 22 (MRRALRLLPLPLSIAICLPAMA), serve as a signal peptide directing secretion.

It belongs to the LptD family. As to quaternary structure, component of the lipopolysaccharide transport and assembly complex. Interacts with LptE and LptA.

The protein resides in the cell outer membrane. Its function is as follows. Together with LptE, is involved in the assembly of lipopolysaccharide (LPS) at the surface of the outer membrane. This chain is LPS-assembly protein LptD, found in Xanthomonas oryzae pv. oryzae (strain KACC10331 / KXO85).